A 43-amino-acid chain; its full sequence is MTSGPNQPVSYPIFTVRWLAVHTLAVPSVFFLGAIAAMQFIQR.

Residues 18-34 (WLAVHTLAVPSVFFLGA) traverse the membrane as a helical segment. Histidine 22 is a heme binding site.

This sequence belongs to the PsbE/PsbF family. Heterodimer of an alpha subunit and a beta subunit. PSII is composed of 1 copy each of membrane proteins PsbA, PsbB, PsbC, PsbD, PsbE, PsbF, PsbH, PsbI, PsbJ, PsbK, PsbL, PsbM, PsbT, PsbX, PsbY, PsbZ, Psb30/Ycf12, peripheral proteins PsbO, CyanoQ (PsbQ), PsbU, PsbV and a large number of cofactors. It forms dimeric complexes. The cofactor is heme b.

It is found in the cellular thylakoid membrane. Functionally, this b-type cytochrome is tightly associated with the reaction center of photosystem II (PSII). PSII is a light-driven water:plastoquinone oxidoreductase that uses light energy to abstract electrons from H(2)O, generating O(2) and a proton gradient subsequently used for ATP formation. It consists of a core antenna complex that captures photons, and an electron transfer chain that converts photonic excitation into a charge separation. The sequence is that of Cytochrome b559 subunit beta from Picosynechococcus sp. (strain ATCC 27264 / PCC 7002 / PR-6) (Agmenellum quadruplicatum).